A 66-amino-acid chain; its full sequence is UPF0370 protein YpfN (66 aa).

The chain crosses the membrane as a helical span at residues 4 to 24 (LAKYWWILVIVFLVGVLLNVI). The disordered stretch occupies residues 39-66 (KPELPPHRDFNDKWDDDDDWPKKDQPKK). Over residues 42–51 (LPPHRDFNDK) the composition is skewed to basic and acidic residues.

The protein belongs to the UPF0370 family.

It localises to the cell membrane. This is UPF0370 protein YpfN from Escherichia coli O139:H28 (strain E24377A / ETEC).